Consider the following 217-residue polypeptide: UPF0502 protein KPN78578_10500 (217 aa).

Belongs to the UPF0502 family.

This Klebsiella pneumoniae subsp. pneumoniae (strain ATCC 700721 / MGH 78578) protein is UPF0502 protein KPN78578_10500.